The sequence spans 205 residues: dTTP/UTP pyrophosphatase (205 aa).

Aspartate 71 functions as the Proton acceptor in the catalytic mechanism.

Belongs to the Maf family. YhdE subfamily. A divalent metal cation serves as cofactor.

The protein localises to the cytoplasm. The enzyme catalyses dTTP + H2O = dTMP + diphosphate + H(+). The catalysed reaction is UTP + H2O = UMP + diphosphate + H(+). Functionally, nucleoside triphosphate pyrophosphatase that hydrolyzes dTTP and UTP. May have a dual role in cell division arrest and in preventing the incorporation of modified nucleotides into cellular nucleic acids. This Syntrophus aciditrophicus (strain SB) protein is dTTP/UTP pyrophosphatase.